A 143-amino-acid polypeptide reads, in one-letter code: Small ribosomal subunit protein uS11c (143 aa).

This sequence belongs to the universal ribosomal protein uS11 family. As to quaternary structure, part of the 30S ribosomal subunit.

It is found in the plastid. The protein localises to the chloroplast. The polypeptide is Small ribosomal subunit protein uS11c (Oryza nivara (Indian wild rice)).